Reading from the N-terminus, the 442-residue chain is Trigger factor (442 aa).

Residues 165–250 form the PPIase FKBP-type domain; it reads DDRVIIDFEG…LQKVMAPELP (86 aa).

Belongs to the FKBP-type PPIase family. Tig subfamily.

Its subcellular location is the cytoplasm. The catalysed reaction is [protein]-peptidylproline (omega=180) = [protein]-peptidylproline (omega=0). Functionally, involved in protein export. Acts as a chaperone by maintaining the newly synthesized protein in an open conformation. Functions as a peptidyl-prolyl cis-trans isomerase. This is Trigger factor from Coxiella burnetii (strain CbuK_Q154) (Coxiella burnetii (strain Q154)).